Here is a 172-residue protein sequence, read N- to C-terminus: NADH-quinone oxidoreductase subunit B (172 aa).

4 residues coordinate [4Fe-4S] cluster: C42, C43, C107, and C136.

This sequence belongs to the complex I 20 kDa subunit family. In terms of assembly, NDH-1 is composed of 14 different subunits. Subunits NuoB, C, D, E, F, and G constitute the peripheral sector of the complex. [4Fe-4S] cluster is required as a cofactor.

The protein resides in the cell inner membrane. It carries out the reaction a quinone + NADH + 5 H(+)(in) = a quinol + NAD(+) + 4 H(+)(out). Its function is as follows. NDH-1 shuttles electrons from NADH, via FMN and iron-sulfur (Fe-S) centers, to quinones in the respiratory chain. The immediate electron acceptor for the enzyme in this species is believed to be ubiquinone. Couples the redox reaction to proton translocation (for every two electrons transferred, four hydrogen ions are translocated across the cytoplasmic membrane), and thus conserves the redox energy in a proton gradient. The protein is NADH-quinone oxidoreductase subunit B of Sulfurovum sp. (strain NBC37-1).